A 137-amino-acid polypeptide reads, in one-letter code: Large-conductance mechanosensitive channel (137 aa).

The next 2 helical transmembrane spans lie at 9–29 (AFAV…GAAF) and 79–99 (IQTI…VKAI).

This sequence belongs to the MscL family. Homopentamer.

The protein localises to the cell inner membrane. Its function is as follows. Channel that opens in response to stretch forces in the membrane lipid bilayer. May participate in the regulation of osmotic pressure changes within the cell. This is Large-conductance mechanosensitive channel from Pseudomonas paraeruginosa (strain DSM 24068 / PA7) (Pseudomonas aeruginosa (strain PA7)).